The primary structure comprises 497 residues: Proline--tRNA ligase (497 aa).

Belongs to the class-II aminoacyl-tRNA synthetase family. ProS type 3 subfamily. Homodimer.

The protein resides in the cytoplasm. It carries out the reaction tRNA(Pro) + L-proline + ATP = L-prolyl-tRNA(Pro) + AMP + diphosphate. Its function is as follows. Catalyzes the attachment of proline to tRNA(Pro) in a two-step reaction: proline is first activated by ATP to form Pro-AMP and then transferred to the acceptor end of tRNA(Pro). This chain is Proline--tRNA ligase, found in Bacteroides fragilis (strain ATCC 25285 / DSM 2151 / CCUG 4856 / JCM 11019 / LMG 10263 / NCTC 9343 / Onslow / VPI 2553 / EN-2).